The primary structure comprises 639 residues: tRNA 5-methylaminomethyl-2-thiouridine biosynthesis bifunctional protein MnmC (639 aa).

The interval 1–228 (MSEPIEWLED…KRDNLQATYA (228 aa)) is tRNA (mnm(5)s(2)U34)-methyltransferase. An FAD-dependent cmnm(5)s(2)U34 oxidoreductase region spans residues 254–639 (VGAGLAGAAV…SERWLGYEPQ (386 aa)).

The protein in the N-terminal section; belongs to the methyltransferase superfamily. tRNA (mnm(5)s(2)U34)-methyltransferase family. In the C-terminal section; belongs to the DAO family. FAD serves as cofactor.

The protein localises to the cytoplasm. The catalysed reaction is 5-aminomethyl-2-thiouridine(34) in tRNA + S-adenosyl-L-methionine = 5-methylaminomethyl-2-thiouridine(34) in tRNA + S-adenosyl-L-homocysteine + H(+). In terms of biological role, catalyzes the last two steps in the biosynthesis of 5-methylaminomethyl-2-thiouridine (mnm(5)s(2)U) at the wobble position (U34) in tRNA. Catalyzes the FAD-dependent demodification of cmnm(5)s(2)U34 to nm(5)s(2)U34, followed by the transfer of a methyl group from S-adenosyl-L-methionine to nm(5)s(2)U34, to form mnm(5)s(2)U34. The sequence is that of tRNA 5-methylaminomethyl-2-thiouridine biosynthesis bifunctional protein MnmC from Acidovorax sp. (strain JS42).